A 360-amino-acid chain; its full sequence is Phenylalanine--tRNA ligase alpha subunit (360 aa).

Glu260 serves as a coordination point for Mg(2+).

Belongs to the class-II aminoacyl-tRNA synthetase family. Phe-tRNA synthetase alpha subunit type 1 subfamily. Tetramer of two alpha and two beta subunits. Mg(2+) is required as a cofactor.

The protein resides in the cytoplasm. The enzyme catalyses tRNA(Phe) + L-phenylalanine + ATP = L-phenylalanyl-tRNA(Phe) + AMP + diphosphate + H(+). This is Phenylalanine--tRNA ligase alpha subunit from Cereibacter sphaeroides (strain ATCC 17029 / ATH 2.4.9) (Rhodobacter sphaeroides).